The sequence spans 407 residues: Argininosuccinate synthase (407 aa).

Residues 12 to 20 and A39 contribute to the ATP site; that span reads AYSGGLDTS. L-citrulline-binding residues include Y92 and S97. Position 122 (G122) interacts with ATP. Positions 124, 128, and 129 each coordinate L-aspartate. Residue N128 participates in L-citrulline binding. L-citrulline-binding residues include R132, S182, S191, E267, and Y279.

It belongs to the argininosuccinate synthase family. Type 1 subfamily. As to quaternary structure, homotetramer.

It is found in the cytoplasm. The enzyme catalyses L-citrulline + L-aspartate + ATP = 2-(N(omega)-L-arginino)succinate + AMP + diphosphate + H(+). It participates in amino-acid biosynthesis; L-arginine biosynthesis; L-arginine from L-ornithine and carbamoyl phosphate: step 2/3. The chain is Argininosuccinate synthase from Campylobacter fetus subsp. fetus (strain 82-40).